Here is a 304-residue protein sequence, read N- to C-terminus: Type II restriction enzyme LlaDCHI (304 aa).

This sequence belongs to the DpnII type II restriction endonuclease family.

It carries out the reaction Endonucleolytic cleavage of DNA to give specific double-stranded fragments with terminal 5'-phosphates.. Its function is as follows. A P subtype restriction enzyme that recognizes the double-stranded unmethylated sequence 5'-GATC-3' and cleaves before G-1. This chain is Type II restriction enzyme LlaDCHI (llaDCHIR), found in Lactococcus lactis subsp. cremoris (Streptococcus cremoris).